The following is a 432-amino-acid chain: Fibroleukin (432 aa).

A signal peptide spans 1-19 (MRLPGWLWLSSAVLAACRA). A glycan (N-linked (GlcNAc...) asparagine) is linked at N24. The stretch at 71-157 (GSMEEVLKEV…QGRLETLHLV (87 aa)) forms a coiled coil. Positions 100–122 (QADDHRDPGGNGGNGAETAEDSR) are disordered. N-linked (GlcNAc...) asparagine glycans are attached at residues N172, N228, N256, and N329. Residues 197–429 (PVQHLIYKDC…QAKMMIRPKN (233 aa)) enclose the Fibrinogen C-terminal domain. C206 and C235 are disulfide-bonded. An intrachain disulfide couples C364 to C377.

As to quaternary structure, homotetramer; disulfide-linked. Constitutively expressed in cytotoxic T-cells.

It is found in the secreted. In terms of biological role, converts prothrombin to thrombin. The chain is Fibroleukin (Fgl2) from Mus musculus (Mouse).